The chain runs to 252 residues: Imidazole glycerol phosphate synthase subunit HisF (252 aa).

Residues Asp-11 and Asp-130 contribute to the active site.

Belongs to the HisA/HisF family. Heterodimer of HisH and HisF.

The protein resides in the cytoplasm. The catalysed reaction is 5-[(5-phospho-1-deoxy-D-ribulos-1-ylimino)methylamino]-1-(5-phospho-beta-D-ribosyl)imidazole-4-carboxamide + L-glutamine = D-erythro-1-(imidazol-4-yl)glycerol 3-phosphate + 5-amino-1-(5-phospho-beta-D-ribosyl)imidazole-4-carboxamide + L-glutamate + H(+). Its pathway is amino-acid biosynthesis; L-histidine biosynthesis; L-histidine from 5-phospho-alpha-D-ribose 1-diphosphate: step 5/9. IGPS catalyzes the conversion of PRFAR and glutamine to IGP, AICAR and glutamate. The HisF subunit catalyzes the cyclization activity that produces IGP and AICAR from PRFAR using the ammonia provided by the HisH subunit. The polypeptide is Imidazole glycerol phosphate synthase subunit HisF (Polynucleobacter necessarius subsp. necessarius (strain STIR1)).